Reading from the N-terminus, the 111-residue chain is Iron-sulfur cluster assembly protein CyaY (111 aa).

Belongs to the frataxin family.

Functionally, involved in iron-sulfur (Fe-S) cluster assembly. May act as a regulator of Fe-S biogenesis. The protein is Iron-sulfur cluster assembly protein CyaY of Cupriavidus taiwanensis (strain DSM 17343 / BCRC 17206 / CCUG 44338 / CIP 107171 / LMG 19424 / R1) (Ralstonia taiwanensis (strain LMG 19424)).